Here is a 141-residue protein sequence, read N- to C-terminus: Transmembrane protein 216 (141 aa).

4 helical membrane passes run I15 to F35, L49 to F69, L82 to L102, and S115 to F135.

Part of the tectonic-like complex (also named B9 complex). Interacts with TMEM107.

Its subcellular location is the membrane. It localises to the cytoplasm. The protein resides in the cytoskeleton. The protein localises to the cilium basal body. Part of the tectonic-like complex which is required for tissue-specific ciliogenesis and may regulate ciliary membrane composition. The polypeptide is Transmembrane protein 216 (TMEM216) (Bos taurus (Bovine)).